Reading from the N-terminus, the 495-residue chain is UDP-N-acetylmuramoyl-L-alanyl-D-glutamate--2,6-diaminopimelate ligase (495 aa).

Serine 29 provides a ligand contact to UDP-N-acetyl-alpha-D-muramoyl-L-alanyl-D-glutamate. Glycine 111–serine 117 provides a ligand contact to ATP. UDP-N-acetyl-alpha-D-muramoyl-L-alanyl-D-glutamate-binding positions include threonine 153–threonine 154, serine 180, glutamine 186, and arginine 188. Lysine 220 is subject to N6-carboxylysine. Residues arginine 384, aspartate 408–arginine 411, glycine 459, and glutamate 463 each bind meso-2,6-diaminopimelate. The short motif at aspartate 408–arginine 411 is the Meso-diaminopimelate recognition motif element.

The protein belongs to the MurCDEF family. MurE subfamily. Mg(2+) serves as cofactor. In terms of processing, carboxylation is probably crucial for Mg(2+) binding and, consequently, for the gamma-phosphate positioning of ATP.

The protein resides in the cytoplasm. It catalyses the reaction UDP-N-acetyl-alpha-D-muramoyl-L-alanyl-D-glutamate + meso-2,6-diaminopimelate + ATP = UDP-N-acetyl-alpha-D-muramoyl-L-alanyl-gamma-D-glutamyl-meso-2,6-diaminopimelate + ADP + phosphate + H(+). The protein operates within cell wall biogenesis; peptidoglycan biosynthesis. Its function is as follows. Catalyzes the addition of meso-diaminopimelic acid to the nucleotide precursor UDP-N-acetylmuramoyl-L-alanyl-D-glutamate (UMAG) in the biosynthesis of bacterial cell-wall peptidoglycan. The chain is UDP-N-acetylmuramoyl-L-alanyl-D-glutamate--2,6-diaminopimelate ligase from Xylella fastidiosa (strain 9a5c).